Here is a 358-residue protein sequence, read N- to C-terminus: Gentisate 1,2-dioxygenase (358 aa).

The region spanning 99–165 is the Cupin type-2 domain; the sequence is QYLGPREVAP…VTDEPMAWLD (67 aa). The segment at 185–215 is disordered; sequence DELSTRETPERSRGERLWGHPGLRPIGRPDQ. Residues 187–202 show a composition bias toward basic and acidic residues; that stretch reads LSTRETPERSRGERLW.

The protein belongs to the gentisate 1,2-dioxygenase family.

It carries out the reaction 2,5-dihydroxybenzoate + O2 = 3-maleylpyruvate + H(+). Its function is as follows. Involved in the degradation of salicylate via a pathway involving coenzyme A derivative. Catalyzes the oxygen-dependent ring fission of gentisate between the carboxyl and proximal hydroxyl groups at positions 1 and 2 of the aromatic ring to form maleylpyruvate. The substrate specificity is strong, since salicylate, catechol, protocatechuic acid, homogenetisate, 2,3-dihydroxybenzoate or 5-aminosalicylate cannot substitute for gentisate in the ring cleavage reaction. This Streptomyces sp protein is Gentisate 1,2-dioxygenase.